The primary structure comprises 554 residues: Solute carrier family 22 member 22 (554 aa).

Residues 1-15 are Cytoplasmic-facing; it reads MDFDEILHHVGDSGR. Residues 16-36 form a helical membrane-spanning segment; it reads FQICMIILLNILSLVLSPHDV. The Extracellular segment spans residues 37–144; the sequence is LENFTAAIPA…DLVCDFQSFK (108 aa). The N-linked (GlcNAc...) asparagine glycan is linked to Asn39. A helical membrane pass occupies residues 145–165; that stretch reads YYAQATSLAGHLVSCPLSGII. The Cytoplasmic segment spans residues 166–172; the sequence is SDRFGRK. A helical membrane pass occupies residues 173 to 193; it reads PLLMYCSLAYGAVGTYCAFAP. An N-linked (GlcNAc...) asparagine glycan is attached at Asn194. Residues 194 to 199 lie on the Extracellular side of the membrane; it reads NFSVYC. A helical transmembrane segment spans residues 200–220; that stretch reads VLRFLLSAFQSTILINSLILV. Topologically, residues 221–231 are cytoplasmic; sequence LEEASVQWHPT. Residues 232-252 form a helical membrane-spanning segment; it reads IIVLSGLFNSIGQGVLGGLAY. Residues 253-258 lie on the Extracellular side of the membrane; it reads VISDWH. Residues 259–279 traverse the membrane as a helical segment; sequence LLQLAYALPFFIFFVLFCWVP. Residues 280–347 lie on the Cytoplasmic side of the membrane; the sequence is ESVRWLIITG…DIFINPLIRK (68 aa). A helical membrane pass occupies residues 348–368; the sequence is IVLSNSSLLFAELFSFVGLLL. The Extracellular portion of the chain corresponds to 369-376; it reads DVQLLGKN. Residues 377–397 form a helical membrane-spanning segment; it reads MFLTQIFLGAIDVPSKSLTYF. Residues 398 to 405 are Cytoplasmic-facing; it reads TIRNVSRR. The helical transmembrane segment at 406 to 426 threads the bilayer; the sequence is PLIAFLLLTTGSCITITIFIS. Residues 427–434 lie on the Extracellular side of the membrane; sequence EEMYVLRT. A helical transmembrane segment spans residues 435–455; the sequence is IIFILGKGCFAAFTCISTTYI. The Cytoplasmic segment spans residues 456–466; it reads NELSPVELRST. The chain crosses the membrane as a helical span at residues 467 to 487; that stretch reads LNGVFLAVVRLAGVLSALTLA. Residues 488–491 lie on the Extracellular side of the membrane; it reads TRKY. A helical membrane pass occupies residues 492 to 512; that stretch reads FVYLPMILYGVLPIVATISIL. Over 513-554 the chain is Cytoplasmic; the sequence is FLPETFNLPHTDIIKDMEKRKRLMSKNISKKEGQDFLETTEC.

The protein belongs to the major facilitator (TC 2.A.1) superfamily. Organic cation transporter (TC 2.A.1.19) family. Specifically expressed in kidney where it is found in proximal convoluted tubules (at protein level). Colocalizes with the prostaglandin-inactivating enzyme HPGD in kidney (at protein level). Not detected in other tissues tested.

It is found in the basolateral cell membrane. In terms of biological role, sodium-independent organic anion transporter which exhibits high specificity for a subset of prostaglandins including prostaglandin E2 (PGE2), prostaglandin E1 (PGE1), prostaglandin F2-alpha (PGF2-alpha) and prostaglandin D2 (PGD2). The protein is Solute carrier family 22 member 22 of Mus musculus (Mouse).